The chain runs to 249 residues: GTP cyclohydrolase III (249 aa).

The protein belongs to the archaeal-type GTP cyclohydrolase family.

It catalyses the reaction GTP + 3 H2O = 2-amino-5-formylamino-6-(5-phospho-D-ribosylamino)pyrimidin-4(3H)-one + 2 phosphate + 2 H(+). Its function is as follows. Catalyzes the formation of 2-amino-5-formylamino-6-ribofuranosylamino-4(3H)-pyrimidinone ribonucleotide monophosphate and inorganic phosphate from GTP. Also has an independent pyrophosphate phosphohydrolase activity. The sequence is that of GTP cyclohydrolase III from Methanothermobacter thermautotrophicus (strain ATCC 29096 / DSM 1053 / JCM 10044 / NBRC 100330 / Delta H) (Methanobacterium thermoautotrophicum).